A 287-amino-acid polypeptide reads, in one-letter code: ATP synthase gamma chain (287 aa).

It belongs to the ATPase gamma chain family. In terms of assembly, F-type ATPases have 2 components, CF(1) - the catalytic core - and CF(0) - the membrane proton channel. CF(1) has five subunits: alpha(3), beta(3), gamma(1), delta(1), epsilon(1). CF(0) has three main subunits: a, b and c.

The protein resides in the cell inner membrane. In terms of biological role, produces ATP from ADP in the presence of a proton gradient across the membrane. The gamma chain is believed to be important in regulating ATPase activity and the flow of protons through the CF(0) complex. In Escherichia fergusonii (strain ATCC 35469 / DSM 13698 / CCUG 18766 / IAM 14443 / JCM 21226 / LMG 7866 / NBRC 102419 / NCTC 12128 / CDC 0568-73), this protein is ATP synthase gamma chain.